The following is a 52-amino-acid chain: Large ribosomal subunit protein bL32c (52 aa).

It belongs to the bacterial ribosomal protein bL32 family.

It is found in the plastid. Its subcellular location is the chloroplast. In Olimarabidopsis pumila (Dwarf rocket), this protein is Large ribosomal subunit protein bL32c.